Reading from the N-terminus, the 303-residue chain is UDP-3-O-acyl-N-acetylglucosamine deacetylase (303 aa).

Residues His78, His237, and Asp241 each contribute to the Zn(2+) site. Residue His264 is the Proton donor of the active site.

The protein belongs to the LpxC family. The cofactor is Zn(2+).

It catalyses the reaction a UDP-3-O-[(3R)-3-hydroxyacyl]-N-acetyl-alpha-D-glucosamine + H2O = a UDP-3-O-[(3R)-3-hydroxyacyl]-alpha-D-glucosamine + acetate. The protein operates within glycolipid biosynthesis; lipid IV(A) biosynthesis; lipid IV(A) from (3R)-3-hydroxytetradecanoyl-[acyl-carrier-protein] and UDP-N-acetyl-alpha-D-glucosamine: step 2/6. Catalyzes the hydrolysis of UDP-3-O-myristoyl-N-acetylglucosamine to form UDP-3-O-myristoylglucosamine and acetate, the committed step in lipid A biosynthesis. This Pseudomonas paraeruginosa (strain DSM 24068 / PA7) (Pseudomonas aeruginosa (strain PA7)) protein is UDP-3-O-acyl-N-acetylglucosamine deacetylase.